Reading from the N-terminus, the 428-residue chain is GTPase Obg (428 aa).

Positions Met1–Leu158 constitute an Obg domain. The OBG-type G domain occupies Ala159–Ser330. Residues Gly165–Ser172, Phe190–Glu194, Asp212–Gly215, Asn282–Asp285, and Ser311–Leu313 each bind GTP. Mg(2+)-binding residues include Ser172 and Thr192. Residues Glu349–Glu428 form the OCT domain.

This sequence belongs to the TRAFAC class OBG-HflX-like GTPase superfamily. OBG GTPase family. As to quaternary structure, monomer. Mg(2+) is required as a cofactor.

Its subcellular location is the cytoplasm. Functionally, an essential GTPase which binds GTP, GDP and possibly (p)ppGpp with moderate affinity, with high nucleotide exchange rates and a fairly low GTP hydrolysis rate. Plays a role in control of the cell cycle, stress response, ribosome biogenesis and in those bacteria that undergo differentiation, in morphogenesis control. The sequence is that of GTPase Obg from Fusobacterium nucleatum subsp. nucleatum (strain ATCC 25586 / DSM 15643 / BCRC 10681 / CIP 101130 / JCM 8532 / KCTC 2640 / LMG 13131 / VPI 4355).